The primary structure comprises 336 residues: uncharacterized protein (336 aa).

Disordered regions lie at residues 29-93 (GGVS…HSGA) and 116-147 (LQER…GVTG). 2 stretches are compositionally biased toward polar residues: residues 70–82 (SGGS…TSTA) and 125–141 (PWRT…SQPH).

This is an uncharacterized protein from Bos taurus (Bovine).